The following is a 308-amino-acid chain: MRKLVVGSRRSKLALTQSQQFIDKLKAVEPNLEIEIKEIVTKGDRIVDKQLSKVGGKGLFVKEIQHELFEKNIDMAIHSLKDVPSVIPEGLTLGCIPDRELPFDAYISKTHTPLSQLPEGSIIGTSSLRRGAQILSKYPNLEIKWIRGNIDTRLEKLQTEDYDAIILAAAGLRRMGWSDDIVTSYLDRDTLLPAIGQGALGIECRSDDEELLTLLSKVHNDEVAKCVTAERTFLAEMDGSCQVPIAGYATISDQKEIEFTGLIMTPDGKERFEYTMNGTDPVELGKTVSNKLKEQGAYEIIKRLNEQH.

Cysteine 241 carries the S-(dipyrrolylmethanemethyl)cysteine modification.

It belongs to the HMBS family. As to quaternary structure, monomer. Dipyrromethane is required as a cofactor.

The catalysed reaction is 4 porphobilinogen + H2O = hydroxymethylbilane + 4 NH4(+). It functions in the pathway porphyrin-containing compound metabolism; protoporphyrin-IX biosynthesis; coproporphyrinogen-III from 5-aminolevulinate: step 2/4. In terms of biological role, tetrapolymerization of the monopyrrole PBG into the hydroxymethylbilane pre-uroporphyrinogen in several discrete steps. The protein is Porphobilinogen deaminase of Staphylococcus aureus (strain MSSA476).